The following is a 276-amino-acid chain: Large ribosomal subunit protein uL2 (276 aa).

The interval 222–276 (GVAMNPIDHPLGGGEGRSSGGRHPVSPWGMPTKGYKTRDRKKASSKLIIKRRGQK) is disordered. Positions 259-276 (RDRKKASSKLIIKRRGQK) are enriched in basic residues.

Belongs to the universal ribosomal protein uL2 family. In terms of assembly, part of the 50S ribosomal subunit. Forms a bridge to the 30S subunit in the 70S ribosome.

Functionally, one of the primary rRNA binding proteins. Required for association of the 30S and 50S subunits to form the 70S ribosome, for tRNA binding and peptide bond formation. It has been suggested to have peptidyltransferase activity; this is somewhat controversial. Makes several contacts with the 16S rRNA in the 70S ribosome. The chain is Large ribosomal subunit protein uL2 from Nitratidesulfovibrio vulgaris (strain ATCC 29579 / DSM 644 / CCUG 34227 / NCIMB 8303 / VKM B-1760 / Hildenborough) (Desulfovibrio vulgaris).